Consider the following 292-residue polypeptide: NAD kinase (292 aa).

Asp73 functions as the Proton acceptor in the catalytic mechanism. NAD(+) is bound by residues 73-74 (DG), 147-148 (NE), His158, Arg175, Asp177, 188-193 (TGYSLS), and Gln247.

This sequence belongs to the NAD kinase family. The cofactor is a divalent metal cation.

The protein resides in the cytoplasm. The catalysed reaction is NAD(+) + ATP = ADP + NADP(+) + H(+). Its function is as follows. Involved in the regulation of the intracellular balance of NAD and NADP, and is a key enzyme in the biosynthesis of NADP. Catalyzes specifically the phosphorylation on 2'-hydroxyl of the adenosine moiety of NAD to yield NADP. This Buchnera aphidicola subsp. Acyrthosiphon pisum (strain 5A) protein is NAD kinase.